Reading from the N-terminus, the 237-residue chain is Probable Bax inhibitor 1 (237 aa).

Residues 1-29 (MNVFDRNINFDSLFKFSQISHSTQVHLKN) are Cytoplasmic-facing. Residues 30 to 50 (VYSSLAVCMFVAAAGSYVHVV) form a helical membrane-spanning segment. The Lumenal portion of the chain corresponds to 51 to 52 (TR). A helical transmembrane segment spans residues 53–73 (LFQGGMLSVLGSLGMMFWLAM). Residues 74 to 86 (TPHNSETEKKRLA) lie on the Cytoplasmic side of the membrane. The chain crosses the membrane as a helical span at residues 87-107 (ILAGFAFLTGVGLCPTLDFVI). At 108 to 112 (AINPS) the chain is on the lumenal side. The chain crosses the membrane as a helical span at residues 113-133 (IIVTAFLGTSVIFVCFTLSAL). Over 134–139 (YAKRRS) the chain is Cytoplasmic. The helical transmembrane segment at 140–160 (YLFLGGTLMSGLSILFLMSMM) threads the bilayer. The Lumenal portion of the chain corresponds to 161 to 166 (NMFFGS). A helical transmembrane segment spans residues 167–187 (VMLFKAHMYLGLLIMCGFVLX). At 188–206 (DTQLIIEKAENGDKDYVWH) the chain is on the cytoplasmic side. An intramembrane region (helical) is located at residues 207–227 (SVDLFLDFITIFRKLMVILAL). At 228-237 (NDKDKKKEKK) the chain is on the cytoplasmic side.

The protein belongs to the BI1 family. As to expression, highly abundant in testis.

It is found in the endoplasmic reticulum membrane. Suppressor of apoptosis. Modulates unfolded protein response signaling. Modulate ER calcium homeostasis by acting as a calcium-leak channel. This Paralichthys olivaceus (Bastard halibut) protein is Probable Bax inhibitor 1 (tmbim6).